A 327-amino-acid chain; its full sequence is Biotin synthase (327 aa).

Residues 49–282 form the Radical SAM core domain; that stretch reads FNKEKIDLCS…NKVIRLCGGR (234 aa). [4Fe-4S] cluster is bound by residues Cys67, Cys71, and Cys74. The [2Fe-2S] cluster site is built by Ser110, Cys142, Cys201, and Arg277.

It belongs to the radical SAM superfamily. Biotin synthase family. Homodimer. [4Fe-4S] cluster is required as a cofactor. [2Fe-2S] cluster serves as cofactor.

It carries out the reaction (4R,5S)-dethiobiotin + (sulfur carrier)-SH + 2 reduced [2Fe-2S]-[ferredoxin] + 2 S-adenosyl-L-methionine = (sulfur carrier)-H + biotin + 2 5'-deoxyadenosine + 2 L-methionine + 2 oxidized [2Fe-2S]-[ferredoxin]. Its pathway is cofactor biosynthesis; biotin biosynthesis; biotin from 7,8-diaminononanoate: step 2/2. In terms of biological role, catalyzes the conversion of dethiobiotin (DTB) to biotin by the insertion of a sulfur atom into dethiobiotin via a radical-based mechanism. The sequence is that of Biotin synthase from Methanococcus maripaludis (strain DSM 14266 / JCM 13030 / NBRC 101832 / S2 / LL).